The chain runs to 373 residues: 3-dehydroquinate synthase (373 aa).

NAD(+) contacts are provided by residues glycine 107–aspartate 111, threonine 131–serine 132, lysine 144, and lysine 153. Zn(2+)-binding residues include glutamate 186, histidine 249, and histidine 267.

The protein belongs to the sugar phosphate cyclases superfamily. Dehydroquinate synthase family. Requires Co(2+) as cofactor. The cofactor is Zn(2+). It depends on NAD(+) as a cofactor.

The protein localises to the cytoplasm. The enzyme catalyses 7-phospho-2-dehydro-3-deoxy-D-arabino-heptonate = 3-dehydroquinate + phosphate. It participates in metabolic intermediate biosynthesis; chorismate biosynthesis; chorismate from D-erythrose 4-phosphate and phosphoenolpyruvate: step 2/7. Catalyzes the conversion of 3-deoxy-D-arabino-heptulosonate 7-phosphate (DAHP) to dehydroquinate (DHQ). The sequence is that of 3-dehydroquinate synthase from Ruegeria sp. (strain TM1040) (Silicibacter sp.).